We begin with the raw amino-acid sequence, 373 residues long: Flagellar P-ring protein (373 aa).

A signal peptide spans methionine 1–serine 27.

The protein belongs to the FlgI family. The basal body constitutes a major portion of the flagellar organelle and consists of four rings (L,P,S, and M) mounted on a central rod.

It is found in the periplasm. It localises to the bacterial flagellum basal body. Its function is as follows. Assembles around the rod to form the L-ring and probably protects the motor/basal body from shearing forces during rotation. The sequence is that of Flagellar P-ring protein from Rhodopseudomonas palustris (strain BisB5).